Here is a 239-residue protein sequence, read N- to C-terminus: Ribonuclease HII (239 aa).

The region spanning 18–231 (KIIVGLDEAG…SKNLLKEIEE (214 aa)) is the RNase H type-2 domain. Residues Asp24, Glu25, and Asp125 each coordinate a divalent metal cation.

The protein belongs to the RNase HII family. It depends on Mn(2+) as a cofactor. Mg(2+) is required as a cofactor.

The protein resides in the cytoplasm. The catalysed reaction is Endonucleolytic cleavage to 5'-phosphomonoester.. In terms of biological role, endonuclease that specifically degrades the RNA of RNA-DNA hybrids. The protein is Ribonuclease HII of Methanococcus maripaludis (strain C5 / ATCC BAA-1333).